Reading from the N-terminus, the 723-residue chain is Pescadillo homolog (723 aa).

A BRCT domain is found at 380–497 (EAGSLFATFT…KLLRPDLYAP (118 aa)). 2 disordered regions span residues 440-471 (RPQLPQASLPPLPKNPEDGTEAAPRPGTRVPG) and 501-723 (LPPH…LNKK). Residues 522 to 551 (LADQEEEGEAERAAEAEEYENDEQEESGEE) adopt a coiled-coil conformation. 3 stretches are compositionally biased toward acidic residues: residues 537–550 (AEEYENDEQEESGE), 588–600 (MAEDTDESSDDGD), and 608–622 (FDQDEDMSSESEDEE). Composition is skewed to basic and acidic residues over residues 623–634 (EKARSQHQKELE), 670–681 (KKKEEEELERQK), and 700–709 (KKQDAEAEKL). The stretch at 656 to 723 (KKQQAPLAKK…RKIEQGLNKK (68 aa)) forms a coiled coil. Positions 710 to 723 (RQKRRKIEQGLNKK) are enriched in basic residues.

The protein belongs to the pescadillo family. In terms of assembly, component of the NOP7 complex, composed of ERB1, NOP7 and YTM1. The complex is held together by ERB1, which interacts with NOP7 via its N-terminal domain and with YTM1 via a high-affinity interaction between the seven-bladed beta-propeller domains of the 2 proteins. The NOP7 complex associates with the 66S pre-ribosome.

It is found in the nucleus. Its subcellular location is the nucleolus. It localises to the nucleoplasm. In terms of biological role, component of the NOP7 complex, which is required for maturation of the 25S and 5.8S ribosomal RNAs and formation of the 60S ribosome. In Ajellomyces capsulatus (strain NAm1 / WU24) (Darling's disease fungus), this protein is Pescadillo homolog.